Reading from the N-terminus, the 474-residue chain is tRNA-2-methylthio-N(6)-dimethylallyladenosine synthase (474 aa).

The MTTase N-terminal domain maps to 3–120 (KKLHIKTWGC…LPEMINQVKG (118 aa)). The [4Fe-4S] cluster site is built by C12, C49, C83, C157, C161, and C164. The region spanning 143 to 375 (RAEGPTAFVS…QERINQQAMA (233 aa)) is the Radical SAM core domain. Residues 378–441 (RRMLGTTQRI…PNSLRGKVIR (64 aa)) form the TRAM domain.

Belongs to the methylthiotransferase family. MiaB subfamily. In terms of assembly, monomer. [4Fe-4S] cluster is required as a cofactor.

It is found in the cytoplasm. The enzyme catalyses N(6)-dimethylallyladenosine(37) in tRNA + (sulfur carrier)-SH + AH2 + 2 S-adenosyl-L-methionine = 2-methylsulfanyl-N(6)-dimethylallyladenosine(37) in tRNA + (sulfur carrier)-H + 5'-deoxyadenosine + L-methionine + A + S-adenosyl-L-homocysteine + 2 H(+). Functionally, catalyzes the methylthiolation of N6-(dimethylallyl)adenosine (i(6)A), leading to the formation of 2-methylthio-N6-(dimethylallyl)adenosine (ms(2)i(6)A) at position 37 in tRNAs that read codons beginning with uridine. The sequence is that of tRNA-2-methylthio-N(6)-dimethylallyladenosine synthase from Cronobacter sakazakii (strain ATCC BAA-894) (Enterobacter sakazakii).